The following is a 418-amino-acid chain: L-glutamine:2-deoxy-scyllo-inosose aminotransferase (418 aa).

An N6-(pyridoxal phosphate)lysine modification is found at Lys-192.

It belongs to the DegT/DnrJ/EryC1 family. L-glutamine:2-deoxy-scyllo-inosose/scyllo-inosose aminotransferase subfamily. Pyridoxal 5'-phosphate is required as a cofactor.

It carries out the reaction 2-deoxy-L-scyllo-inosose + L-glutamine = 2-deoxy-scyllo-inosamine + 2-oxoglutaramate. It catalyses the reaction 3-amino-2,3-dideoxy-scyllo-inosose + L-glutamine = 2-deoxystreptamine + 2-oxoglutaramate. Its pathway is metabolic intermediate biosynthesis; 2-deoxystreptamine biosynthesis; 2-deoxystreptamine from D-glucose 6-phosphate: step 2/4. The protein operates within metabolic intermediate biosynthesis; 2-deoxystreptamine biosynthesis; 2-deoxystreptamine from D-glucose 6-phosphate: step 4/4. It participates in antibiotic biosynthesis; butirosin biosynthesis. In terms of biological role, catalyzes the PLP-dependent transamination of 2-deoxy-scyllo-inosose (2-DOI) to form 2-deoxy-scyllo-inosamine (2-DOIA) using L-glutamine as the amino donor. Also catalyzes the transamination of 3-amino-2,3-dideoxy-scyllo-inosose (keto-2-DOIA) into 2-deoxystreptamine (2-DOS). This Niallia circulans (Bacillus circulans) protein is L-glutamine:2-deoxy-scyllo-inosose aminotransferase (btrR).